The chain runs to 397 residues: S-adenosylmethionine synthase (397 aa).

His-15 is an ATP binding site. Asp-17 contacts Mg(2+). Glu-43 contacts K(+). The L-methionine site is built by Glu-56 and Gln-99. The interval 99–109 (QSPDIAMGVNK) is flexible loop. Residues 175–177 (DGK), 241–242 (RF), Asp-250, 256–257 (RK), Ala-273, and Lys-277 contribute to the ATP site. Asp-250 is a binding site for L-methionine. Lys-281 serves as a coordination point for L-methionine.

The protein belongs to the AdoMet synthase family. Homotetramer; dimer of dimers. It depends on Mg(2+) as a cofactor. Requires K(+) as cofactor.

The protein resides in the cytoplasm. It carries out the reaction L-methionine + ATP + H2O = S-adenosyl-L-methionine + phosphate + diphosphate. It functions in the pathway amino-acid biosynthesis; S-adenosyl-L-methionine biosynthesis; S-adenosyl-L-methionine from L-methionine: step 1/1. Functionally, catalyzes the formation of S-adenosylmethionine (AdoMet) from methionine and ATP. The overall synthetic reaction is composed of two sequential steps, AdoMet formation and the subsequent tripolyphosphate hydrolysis which occurs prior to release of AdoMet from the enzyme. This is S-adenosylmethionine synthase from Acetivibrio thermocellus (strain ATCC 27405 / DSM 1237 / JCM 9322 / NBRC 103400 / NCIMB 10682 / NRRL B-4536 / VPI 7372) (Clostridium thermocellum).